Here is a 153-residue protein sequence, read N- to C-terminus: Transcriptional repressor NrdR (153 aa).

Residues 1-22 (MRCPACHHNGTRVLDSRPAHEG) form a disordered region. Residues 3-34 (CPACHHNGTRVLDSRPAHEGRSIRRRRECESC) fold into a zinc finger. The region spanning 49-139 (LIVVKKDGTR…VYRQFKDINV (91 aa)) is the ATP-cone domain.

The protein belongs to the NrdR family. It depends on Zn(2+) as a cofactor.

Functionally, negatively regulates transcription of bacterial ribonucleotide reductase nrd genes and operons by binding to NrdR-boxes. This is Transcriptional repressor NrdR from Halalkalibacterium halodurans (strain ATCC BAA-125 / DSM 18197 / FERM 7344 / JCM 9153 / C-125) (Bacillus halodurans).